The chain runs to 227 residues: MRLVVGLGNPGPEYERQRHNVGFMAVDLLHRRYGFGPWKRRFQGLTAEGSVAGEKVLLLKPATFMNLSGQAAGEAMRFYKITPDQVLVFHDELDLPPGRVRVKRGGGHGGHNGLRSLDDHVGKDYWRIRIGIGHPGSKERVTGWVLSNFAKAEEQWLEPLLDALVAEAPLLVAGEPEKYASRIALLTQPPKPPKPPKPPKDGAKETAGKGTEAETAKPPGPAAGRTG.

Tyrosine 14 is a tRNA binding site. Histidine 19 (proton acceptor) is an active-site residue. Positions 64, 66, and 112 each coordinate tRNA. The segment at 182-227 (RIALLTQPPKPPKPPKPPKDGAKETAGKGTEAETAKPPGPAAGRTG) is disordered. Residues 198 to 215 (PPKDGAKETAGKGTEAET) show a composition bias toward basic and acidic residues.

Belongs to the PTH family. In terms of assembly, monomer.

The protein resides in the cytoplasm. It carries out the reaction an N-acyl-L-alpha-aminoacyl-tRNA + H2O = an N-acyl-L-amino acid + a tRNA + H(+). Functionally, hydrolyzes ribosome-free peptidyl-tRNAs (with 1 or more amino acids incorporated), which drop off the ribosome during protein synthesis, or as a result of ribosome stalling. In terms of biological role, catalyzes the release of premature peptidyl moieties from peptidyl-tRNA molecules trapped in stalled 50S ribosomal subunits, and thus maintains levels of free tRNAs and 50S ribosomes. This is Peptidyl-tRNA hydrolase from Rhodospirillum centenum (strain ATCC 51521 / SW).